A 144-amino-acid polypeptide reads, in one-letter code: Lysozyme C II (144 aa).

The signal sequence occupies residues methionine 1–alanine 15. A C-type lysozyme domain is found at lysine 16–valine 144. 4 cysteine pairs are disulfide-bonded: cysteine 21–cysteine 142, cysteine 45–cysteine 130, cysteine 79–cysteine 95, and cysteine 91–cysteine 109. Catalysis depends on residues glutamate 50 and aspartate 67.

It localises to the secreted. It catalyses the reaction Hydrolysis of (1-&gt;4)-beta-linkages between N-acetylmuramic acid and N-acetyl-D-glucosamine residues in a peptidoglycan and between N-acetyl-D-glucosamine residues in chitodextrins.. In terms of biological role, lysozymes have primarily a bacteriolytic function; those in tissues and body fluids are associated with the monocyte-macrophage system and enhance the activity of immunoagents. Has antibacterial activity against the Gram positive bacterium P.citreus. Has no antibacterial activity against the Gram negative bacteria E.coli and Y.ruckeri. Does not have hemolytic activity against trout erythrocytes. In Oncorhynchus mykiss (Rainbow trout), this protein is Lysozyme C II.